The sequence spans 442 residues: Cyclin-A1-2 (442 aa).

Polar residues-rich tracts occupy residues 1–12 and 39–63; these read MSSSSRNLSQEN and ITNQ…NKIG. Positions 1–72 are disordered; that stretch reads MSSSSRNLSQ…GQSKKAPKPA (72 aa).

The protein belongs to the cyclin family. Cyclin AB subfamily. As to quaternary structure, interacts with CDC20-1, CDC20-2, FZR2/CCS52A1 and FZR1/CCS52A2. As to expression, expressed in roots, stems and flowers.

The protein resides in the cytoplasm. It is found in the nucleus. Its function is as follows. Involved in the regulation of male meiosis progression. This chain is Cyclin-A1-2 (CYCA1-2), found in Arabidopsis thaliana (Mouse-ear cress).